The primary structure comprises 534 residues: MLKKLLSCCITSALCFHSSLAFSQPNEIADSAELQQAPDTLPATLMLAPDDIAIADRYIVVFQQPQMMASSSPEFEQFTQQSVDRMSGLYSIQVESVFDHSISGFVANLSPEQLKDLRSDPRVDYIEQDRILSLDPIVSADANQTNAIWGLDRIDQRNLPLDNNYSANFDGTGVTAYVIDTGVNNAHVEFGGRSVSGYDFVDNDADASDCNGHGTHVAGTIGGSLYGVAKNVNLVGVRVLSCSGSGSTSGVIAGVDWVAANASGPSVANMSLGGGQSVALDSAVQSAVQSGVSFMLAAGNSNADACNYSPARVATGVTVGSTTSTDARSSFSNWGSCVDVFAPGSQIKSAWYDGGYKTISGTSMATPHVAGVAALYLQENSSVSPSQVEALIVSRASTGKVTDTRGSVNKLLYSLTDADCGQDCGGPDPTPDPEGKLTSGVPVSGLSGSSGQVAYYYVDVEAGQRLTVQMYGGSGDADLYLRFGAKPTLNAWDCRPFKYGNNETCTVSATQSGRYHVMIQGYSNYSGVSIQANY.

The first 21 residues, 1–21 (MLKKLLSCCITSALCFHSSLA), serve as a signal peptide directing secretion. Residues 22-141 (FSQPNEIADS…LSLDPIVSAD (120 aa)) constitute a propeptide that is removed on maturation. Positions 57-134 (RYIVVFQQPQ…YIEQDRILSL (78 aa)) constitute an Inhibitor I9 domain. Residues 148-419 (IWGLDRIDQR…KLLYSLTDAD (272 aa)) form the Peptidase S8 domain. Active-site charge relay system residues include D180, H213, and S363. A disordered region spans residues 423 to 442 (DCGGPDPTPDPEGKLTSGVP).

The protein belongs to the peptidase S8 family.

This chain is Alkaline serine exoprotease A (proA), found in Vibrio alginolyticus.